The primary structure comprises 154 residues: Homeobox protein engrailed (154 aa).

The segment at residues 37-96 (EKRPRTAFSASQLQRLKQEFQQSNYLTEQRRRSLAKELTLSESQIKIWFQNKRAKIKKAS) is a DNA-binding region (homeobox). Positions 127–154 (KLLNGQNTSGDCSRSDYTSDSDGDSLTH) are disordered. Residues 129–144 (LNGQNTSGDCSRSDYT) show a composition bias toward polar residues. A compositionally biased stretch (acidic residues) spans 145-154 (SDSDGDSLTH).

Belongs to the engrailed homeobox family.

The protein localises to the nucleus. The sequence is that of Homeobox protein engrailed (EN) from Tripneustes gratilla (Hawaian sea urchin).